The primary structure comprises 476 residues: UDP-glucose 6-dehydrogenase (476 aa).

NAD(+) is bound by residues 7-12 (GAGYVG), Asp-32, Arg-37, 85-89 (VNTPT), 126-127 (ST), and Glu-161. Substrate contacts are provided by residues 157–161 (EFLAE), 216–220 (KLAAN), Arg-256, and 263–269 (QASVGFG). Catalysis depends on Cys-272, which acts as the Nucleophile. 272-275 (CFQK) provides a ligand contact to NAD(+). 334–335 (FK) is a binding site for substrate. Arg-342 provides a ligand contact to NAD(+). Residue Arg-439 coordinates substrate.

Belongs to the UDP-glucose/GDP-mannose dehydrogenase family.

The catalysed reaction is UDP-alpha-D-glucose + 2 NAD(+) + H2O = UDP-alpha-D-glucuronate + 2 NADH + 3 H(+). Its pathway is nucleotide-sugar biosynthesis; UDP-alpha-D-glucuronate biosynthesis; UDP-alpha-D-glucuronate from UDP-alpha-D-glucose: step 1/1. Involved in the biosynthesis of glycosaminoglycans; hyaluronan, chondroitin sulfate and heparan sulfate. Required for wingless signaling in different tissues. The polypeptide is UDP-glucose 6-dehydrogenase (sgl) (Drosophila melanogaster (Fruit fly)).